A 270-amino-acid chain; its full sequence is Chlorophyll a-b binding protein, chloroplastic (270 aa).

A chloroplast-targeting transit peptide spans 1 to 41; that stretch reads MASACASSTIAAVAFSSPSSQKNGSIVGATKASFLGGKRLR. Tryptophan 68 is a chlorophyll b binding site. Chlorophyll a contacts are provided by phenylalanine 88, glutamate 107, and histidine 110. Arginine 112 is a binding site for chlorophyll b. Residues 113–133 traverse the membrane as a helical segment; that stretch reads WAMLGAAGIFIPEFLTKIGVL. Glutamine 144 is a binding site for chlorophyll a. Residues 146 to 166 traverse the membrane as a helical segment; it reads YFTDTTTLFVIELVLIGWAEG. Chlorophyll b is bound by residues valine 155, glutamate 165, and arginine 168. Chlorophyll a-binding residues include lysine 221, glutamate 222, asparagine 225, arginine 227, glutamine 239, and histidine 254. A helical membrane pass occupies residues 228-248; sequence LAMLAVMGAWFQHIYTGTGPI.

The protein belongs to the light-harvesting chlorophyll a/b-binding (LHC) protein family. As to quaternary structure, the LHC complex consists of chlorophyll a-b binding proteins. It depends on Binds at least 14 chlorophylls (8 Chl-a and 6 Chl-b) and carotenoids such as lutein and neoxanthin. as a cofactor. In terms of processing, photoregulated by reversible phosphorylation of its threonine residues.

The protein resides in the plastid. The protein localises to the chloroplast thylakoid membrane. The light-harvesting complex (LHC) functions as a light receptor, it captures and delivers excitation energy to photosystems with which it is closely associated. In Petunia hybrida (Petunia), this protein is Chlorophyll a-b binding protein, chloroplastic.